A 536-amino-acid polypeptide reads, in one-letter code: Bifunctional purine biosynthesis protein PurH (536 aa).

The MGS-like domain occupies 8 to 158; the sequence is IPAPDEVRIQ…KNHAYVTIVT (151 aa).

The protein belongs to the PurH family.

The enzyme catalyses (6R)-10-formyltetrahydrofolate + 5-amino-1-(5-phospho-beta-D-ribosyl)imidazole-4-carboxamide = 5-formamido-1-(5-phospho-D-ribosyl)imidazole-4-carboxamide + (6S)-5,6,7,8-tetrahydrofolate. It carries out the reaction IMP + H2O = 5-formamido-1-(5-phospho-D-ribosyl)imidazole-4-carboxamide. It functions in the pathway purine metabolism; IMP biosynthesis via de novo pathway; 5-formamido-1-(5-phospho-D-ribosyl)imidazole-4-carboxamide from 5-amino-1-(5-phospho-D-ribosyl)imidazole-4-carboxamide (10-formyl THF route): step 1/1. The protein operates within purine metabolism; IMP biosynthesis via de novo pathway; IMP from 5-formamido-1-(5-phospho-D-ribosyl)imidazole-4-carboxamide: step 1/1. In Sinorhizobium fredii (strain NBRC 101917 / NGR234), this protein is Bifunctional purine biosynthesis protein PurH.